Here is a 252-residue protein sequence, read N- to C-terminus: Adenylate kinase (252 aa).

47-52 provides a ligand contact to ATP; the sequence is GSGKGT. An NMP region spans residues 67–96; sequence ATGDMLRSQVKQGTPLGLEAKKIMDQGGLV. Residues Thr-68, Arg-73, 94-96, 123-126, and Gln-130 each bind AMP; these read GLV and GFPR. The LID stretch occupies residues 164–201; sequence GRLVHPASGRSYHKIFSPPKKEMTDDITGEPLVQRSDD. ATP contacts are provided by residues Arg-165 and 174–175; that span reads SY. Residues Arg-198 and Arg-209 each coordinate AMP. Gln-237 is an ATP binding site.

It belongs to the adenylate kinase family. AK2 subfamily. In terms of assembly, monomer.

It localises to the cytoplasm. Its subcellular location is the cytosol. The protein resides in the mitochondrion intermembrane space. It catalyses the reaction AMP + ATP = 2 ADP. Its function is as follows. Catalyzes the reversible transfer of the terminal phosphate group between ATP and AMP. Plays an important role in cellular energy homeostasis and in adenine nucleotide metabolism. Adenylate kinase activity is critical for regulation of the phosphate utilization and the AMP de novo biosynthesis pathways. This Lodderomyces elongisporus (strain ATCC 11503 / CBS 2605 / JCM 1781 / NBRC 1676 / NRRL YB-4239) (Yeast) protein is Adenylate kinase.